The sequence spans 505 residues: Maturase K (505 aa).

It belongs to the intron maturase 2 family. MatK subfamily.

It is found in the plastid. It localises to the chloroplast. Usually encoded in the trnK tRNA gene intron. Probably assists in splicing its own and other chloroplast group II introns. This chain is Maturase K, found in Froelichia floridana (Florida snake-cotton).